We begin with the raw amino-acid sequence, 52 residues long: Lantibiotic gallidermin (52 aa).

The propeptide occupies 1–30 (MEAVKEKNELFDLDVKVNAKESNDSGAEPR). Residues 33 to 37 (SKFLC) constitute a cross-link (lanthionine (Ser-Cys)). Residues 38 to 41 (TPGC) constitute a cross-link (beta-methyllanthionine (Thr-Cys)). Thr44 is subject to (Z)-2,3-didehydrobutyrine. The segment at residues 46-51 (SFNSYC) is a cross-link (lanthionine (Ser-Cys)). Positions 49–52 (SYCC) form a cross-link, S-(2-aminovinyl)-D-cysteine (Ser-Cys).

Belongs to the type A lantibiotic family. Maturation of lantibiotics involves the enzymatic conversion of Thr, and Ser into dehydrated AA and the formation of thioether bonds with cysteine. The C-terminal lanthionine undergoes decarboxylation. This is followed by membrane translocation and cleavage of the modified precursor. In terms of processing, the structure of the 2,3-didehydrobutyrine is not discussed in PubMed:1932575. However, in Fig. 5 the NMR model appears to have the Z-isomer.

Functionally, lanthionine-containing peptide antibiotic (lantibiotic) active on Gram-positive bacteria. The bactericidal activity of lantibiotics is based on depolarization of energized bacterial cytoplasmic membranes, initiated by the formation of aqueous transmembrane pores. The protein is Lantibiotic gallidermin (gdmA) of Staphylococcus gallinarum.